The primary structure comprises 165 residues: Interferon gamma (165 aa).

Residues 1–23 form the signal peptide; the sequence is MKYTSYILAFQLCIVLGSLGCYC. Glutamine 24 bears the Pyrrolidone carboxylic acid mark. Asparagine 48 and asparagine 120 each carry an N-linked (GlcNAc...) asparagine glycan.

Belongs to the type II (or gamma) interferon family. Homodimer. Interacts with IFNGR1 (via extracellular domain); this interaction promotes IFNGR1 dimerization. In terms of tissue distribution, released primarily from activated T lymphocytes.

It is found in the secreted. Functionally, type II interferon produced by immune cells such as T-cells and NK cells that plays crucial roles in antimicrobial, antiviral, and antitumor responses by activating effector immune cells and enhancing antigen presentation. Primarily signals through the JAK-STAT pathway after interaction with its receptor IFNGR1 to affect gene regulation. Upon IFNG binding, IFNGR1 intracellular domain opens out to allow association of downstream signaling components JAK2, JAK1 and STAT1, leading to STAT1 activation, nuclear translocation and transcription of IFNG-regulated genes. Many of the induced genes are transcription factors such as IRF1 that are able to further drive regulation of a next wave of transcription. Plays a role in class I antigen presentation pathway by inducing a replacement of catalytic proteasome subunits with immunoproteasome subunits. In turn, increases the quantity, quality, and repertoire of peptides for class I MHC loading. Increases the efficiency of peptide generation also by inducing the expression of activator PA28 that associates with the proteasome and alters its proteolytic cleavage preference. Up-regulates as well MHC II complexes on the cell surface by promoting expression of several key molecules such as cathepsins B/CTSB, H/CTSH, and L/CTSL. Participates in the regulation of hematopoietic stem cells during development and under homeostatic conditions by affecting their development, quiescence, and differentiation. The protein is Interferon gamma (IFNG) of Cercocebus atys (Sooty mangabey).